A 770-amino-acid chain; its full sequence is DNA topoisomerase 1 (770 aa).

The region spanning 4–140 (FRIIIAEKAD…EIRRAKFSAL (137 aa)) is the Toprim domain. Mg(2+)-binding residues include glutamate 10 and aspartate 109. A Topo IA-type catalytic domain is found at 156–563 (NYSLADAADA…ESKKMLHEVL (408 aa)). An interaction with DNA region spans residues 194 to 199 (SAGRVQ). Tyrosine 312 (O-(5'-phospho-DNA)-tyrosine intermediate) is an active-site residue. 3 consecutive C4-type zinc fingers follow at residues 611-638 (CEDP…CPVC), 673-700 (CPAD…YPKC), and 719-744 (CPYC…NMQC).

The protein belongs to the type IA topoisomerase family. Monomer. The cofactor is Mg(2+).

The catalysed reaction is ATP-independent breakage of single-stranded DNA, followed by passage and rejoining.. Releases the supercoiling and torsional tension of DNA, which is introduced during the DNA replication and transcription, by transiently cleaving and rejoining one strand of the DNA duplex. Introduces a single-strand break via transesterification at a target site in duplex DNA. The scissile phosphodiester is attacked by the catalytic tyrosine of the enzyme, resulting in the formation of a DNA-(5'-phosphotyrosyl)-enzyme intermediate and the expulsion of a 3'-OH DNA strand. The free DNA strand then undergoes passage around the unbroken strand, thus removing DNA supercoils. Finally, in the religation step, the DNA 3'-OH attacks the covalent intermediate to expel the active-site tyrosine and restore the DNA phosphodiester backbone. The polypeptide is DNA topoisomerase 1 (Thermoplasma acidophilum (strain ATCC 25905 / DSM 1728 / JCM 9062 / NBRC 15155 / AMRC-C165)).